The sequence spans 294 residues: F-box protein SKIP3 (294 aa).

In terms of domain architecture, F-box spans 21–67 (SSTLDSLPEGCISNIISFTSPEDACVAAAVSKIFESAVKSDIVWEKF).

Part of a SCF (SKP1-cullin-F-box) protein ligase complex. Interacts with SKP1A/ASK1.

It functions in the pathway protein modification; protein ubiquitination. In Arabidopsis thaliana (Mouse-ear cress), this protein is F-box protein SKIP3 (SKIP3).